The following is a 1022-amino-acid chain: rDNA transcriptional regulator POL5 (1022 aa).

Acidic residues-rich tracts occupy residues 706-719 (EEFE…DASE), 728-748 (SESE…EDEA), and 781-802 (DLDQ…ESMD). 2 disordered regions span residues 706–748 (EEFE…EDEA) and 778–805 (GEVD…DDEK). The residue at position 789 (serine 789) is a Phosphoserine.

This sequence belongs to the MYBBP1A family. In terms of assembly, interacts with FRK1.

Its subcellular location is the nucleus. It is found in the nucleolus. The catalysed reaction is DNA(n) + a 2'-deoxyribonucleoside 5'-triphosphate = DNA(n+1) + diphosphate. Stimulated by PCNA and inhibited by aphidicolin. Its function is as follows. Plays an important role in the regulation of rRNA transcription. Binds near or at the enhancer region of rRNA repeating units. May have DNA polymerase activity, but it is not required for in vivo function. This chain is rDNA transcriptional regulator POL5, found in Saccharomyces cerevisiae (strain ATCC 204508 / S288c) (Baker's yeast).